Here is a 247-residue protein sequence, read N- to C-terminus: GTP cyclohydrolase 1 type 2 homolog (247 aa).

5 residues coordinate a divalent metal cation: His63, His64, Asp101, His215, and Glu219.

Belongs to the GTP cyclohydrolase I type 2/NIF3 family. In terms of assembly, homohexamer.

The protein is GTP cyclohydrolase 1 type 2 homolog of Buchnera aphidicola subsp. Baizongia pistaciae (strain Bp).